The sequence spans 280 residues: MDIKASDVKELRDKTGAGMMECKKALQHCNGDAKEAEKYLKEKGLAAVEKRADRVTSEGIIVIKSDHKKAVMLEMTCETDFVAKNADFIAVGEDIAKTAFDKDISEVTPELNDKLLDLATRVRENMNLTRLINVKAGADEYLSRYIHSDKKTGVIIVLKSDKPEIFEKTEVQEFAYDCCLHAAAFMPLYVKKEDVDAAYIKEQEEIFKGQVAELNKPDNVKEGIVKGKISKHLSEICFLEQAFVKDDKLSVSKKMAEVGKEAGGSLSLSKLVIFQLGLGM.

The segment at 79–82 (TDFV) is involved in Mg(2+) ion dislocation from EF-Tu.

It belongs to the EF-Ts family.

It is found in the cytoplasm. Functionally, associates with the EF-Tu.GDP complex and induces the exchange of GDP to GTP. It remains bound to the aminoacyl-tRNA.EF-Tu.GTP complex up to the GTP hydrolysis stage on the ribosome. This chain is Elongation factor Ts, found in Treponema denticola (strain ATCC 35405 / DSM 14222 / CIP 103919 / JCM 8153 / KCTC 15104).